Reading from the N-terminus, the 1454-residue chain is Receptor-type tyrosine-protein phosphatase T (1454 aa).

Positions 1–29 are cleaved as a signal peptide; that stretch reads MGSLGGLALCLLRLLLLGLQRPPLPGAGA. Topologically, residues 30–770 are extracellular; the sequence is QSAAGGCSFD…EKQVDNTVKM (741 aa). In terms of domain architecture, MAM spans 34–195; it reads GGCSFDEHYS…VRVLAHPCRK (162 aa). N-linked (GlcNAc...) asparagine glycosylation is found at Asn-82, Asn-102, Asn-141, and Asn-212. The 92-residue stretch at 197–288 folds into the Ig-like C2-type domain; sequence PHFLRLQNVE…SGVSNYAELI (92 aa). Cys-217 and Cys-271 are oxidised to a cystine. Fibronectin type-III domains are found at residues 295–388, 393–487, and 488–594; these read PIAP…TKCA, GPQN…TEED, and VPGA…SAPS. N-linked (GlcNAc...) asparagine glycosylation is found at Asn-425, Asn-514, Asn-551, Asn-605, Asn-658, and Asn-688. Residues 670–767 enclose the Fibronectin type-III 4 domain; that stretch reads AELKPSNLPV…VEPEKQVDNT (98 aa). A helical membrane pass occupies residues 771–791; sequence AGVIAGLLMFIIILLGVMLTI. The Cytoplasmic segment spans residues 792-1454; sequence KRRKLAKKQK…EVALEYLSSF (663 aa). Residues 800–852 are disordered; sequence QKETQSGAQREMGPVASTDKPTAKLGTNRNDEGFSSSSQDVNGFTDGSRGELS. The segment covering 824 to 841 has biased composition (polar residues); the sequence is LGTNRNDEGFSSSSQDVN. 2 Tyrosine-protein phosphatase domains span residues 902–1156 and 1188–1450; these read FKEE…ILEA and IKDE…ALEY. Residues Asp-1065, 1097–1103, and Gln-1141 contribute to the substrate site; that span reads CSAGAGR. The active-site Phosphocysteine intermediate is Cys-1097. Ser-1221 is subject to Phosphoserine. Cys-1391 functions as the Phosphocysteine intermediate in the catalytic mechanism.

The protein belongs to the protein-tyrosine phosphatase family. Receptor class 2B subfamily. As to expression, expression is restricted to the CNS. Distributed throughout the brain and spinal cord.

It localises to the membrane. It catalyses the reaction O-phospho-L-tyrosyl-[protein] + H2O = L-tyrosyl-[protein] + phosphate. Functionally, may be involved in both signal transduction and cellular adhesion in the CNS. May have specific signaling roles in the tyrosine phosphorylation/dephosphorylation pathway in the anterior compartment of the adult cerebellar cortex. The polypeptide is Receptor-type tyrosine-protein phosphatase T (Ptprt) (Mus musculus (Mouse)).